Here is a 381-residue protein sequence, read N- to C-terminus: MIRKIPSFIEVYKSLIQIPTISSNNKLLDQSNKNFIDLLSNYFSDLNFSVKNYQIPHTDKYNMLACVGSGNGGLLLSGHSDTVDFDEKKWTKDPFKLTETNNKFYGLGAVDMKGFFALILEVISSINIKKIIKPIYILATANEETDMSGAKNFIQSTIIKPDCIIIGEPTSLKLINAHKGHMSYSIKVIGDTGHSSNPDHGVNSIEIMHDVIRSLLILKKYFKEEYQHPNFSIPYPTMNLSSIHGGSAINRICPLCILNFEIRPIPGLTLTQIEIVIKEKLETIMKKWSHRIFIKKLFSSVPAYECPHNSGTIKIVEKLCQLNSAAVNYCTEAPFLQRIAPTLILGPGSIEQAHQPDEYLEHYFIQPTKNIITKLINKFCY.

Position 79 (H79) interacts with Zn(2+). D81 is a catalytic residue. Residue D111 coordinates Zn(2+). The active site involves E143. Zn(2+) is bound by residues E144, E168, and H354.

This sequence belongs to the peptidase M20A family. ArgE subfamily. In terms of assembly, homodimer. Zn(2+) serves as cofactor. It depends on Co(2+) as a cofactor. The cofactor is glutathione.

It is found in the cytoplasm. The enzyme catalyses N(2)-acetyl-L-ornithine + H2O = L-ornithine + acetate. Its pathway is amino-acid biosynthesis; L-arginine biosynthesis; L-ornithine from N(2)-acetyl-L-ornithine (linear): step 1/1. Functionally, catalyzes the hydrolysis of the amide bond of N(2)-acetylated L-amino acids. Cleaves the acetyl group from N-acetyl-L-ornithine to form L-ornithine, an intermediate in L-arginine biosynthesis pathway, and a branchpoint in the synthesis of polyamines. The protein is Acetylornithine deacetylase of Buchnera aphidicola subsp. Acyrthosiphon pisum (strain 5A).